The chain runs to 355 residues: Protein RecA (355 aa).

74-81 (GPESSGKT) is an ATP binding site.

It belongs to the RecA family.

It is found in the cytoplasm. In terms of biological role, can catalyze the hydrolysis of ATP in the presence of single-stranded DNA, the ATP-dependent uptake of single-stranded DNA by duplex DNA, and the ATP-dependent hybridization of homologous single-stranded DNAs. It interacts with LexA causing its activation and leading to its autocatalytic cleavage. This is Protein RecA from Cytophaga hutchinsonii (strain ATCC 33406 / DSM 1761 / CIP 103989 / NBRC 15051 / NCIMB 9469 / D465).